The primary structure comprises 122 residues: Small ribosomal subunit protein uS13 (122 aa).

A disordered region spans residues 97–122; that stretch reads PVRGQRTHTNARTRKGPAKAIAGKKK.

This sequence belongs to the universal ribosomal protein uS13 family. Part of the 30S ribosomal subunit. Forms a loose heterodimer with protein S19. Forms two bridges to the 50S subunit in the 70S ribosome.

Functionally, located at the top of the head of the 30S subunit, it contacts several helices of the 16S rRNA. In the 70S ribosome it contacts the 23S rRNA (bridge B1a) and protein L5 of the 50S subunit (bridge B1b), connecting the 2 subunits; these bridges are implicated in subunit movement. Contacts the tRNAs in the A and P-sites. The chain is Small ribosomal subunit protein uS13 from Bartonella quintana (strain Toulouse) (Rochalimaea quintana).